The sequence spans 202 residues: NADH-quinone oxidoreductase subunit B (202 aa).

Polar residues predominate over residues 1–13 (MSSPTTKFSNAAS). The segment at 1–32 (MSSPTTKFSNAASSAGGPRVTPAAASILDPRT) is disordered. Residues Cys-81, Cys-82, Cys-146, and Cys-176 each contribute to the [4Fe-4S] cluster site.

This sequence belongs to the complex I 20 kDa subunit family. In terms of assembly, NDH-1 is composed of 14 different subunits. Subunits NuoB, C, D, E, F, and G constitute the peripheral sector of the complex. [4Fe-4S] cluster serves as cofactor.

Its subcellular location is the cell inner membrane. It catalyses the reaction a quinone + NADH + 5 H(+)(in) = a quinol + NAD(+) + 4 H(+)(out). In terms of biological role, NDH-1 shuttles electrons from NADH, via FMN and iron-sulfur (Fe-S) centers, to quinones in the respiratory chain. The immediate electron acceptor for the enzyme in this species is believed to be ubiquinone. Couples the redox reaction to proton translocation (for every two electrons transferred, four hydrogen ions are translocated across the cytoplasmic membrane), and thus conserves the redox energy in a proton gradient. The sequence is that of NADH-quinone oxidoreductase subunit B from Nitrobacter hamburgensis (strain DSM 10229 / NCIMB 13809 / X14).